Reading from the N-terminus, the 370-residue chain is MPTPSHLSKDPRYFDFRAARRVPETHAWPGLHDHPVVDGSGAGGGPDAVPVVDMRDPCAAEAVALAAQDWGAFLLEGHGVPLELLAGVEAAIGGMFALPASEKMRAVRRPGDSCGYGSPPISSFFSKCMWSEGYTFSPANLRSDLRKLWPKAGHDYRHFCAVMEEFHREMRALADKLLELFLVALGLTGEQVAAVESEHKIAETMTATMHLNWYPKCPDPKRALGLIAHTDSGFFTFVLQSLVPGLQLFRHGPDRWVTVPAVPGAMVVNVGDLFQILTNGRFHSVYHRAVVNRDSDRISLGYFLGPPAHVKVAPLREALAGTPAAYRAVTWPEYMGVRKKAFTTGASALKMVAISTDNDAANDTDDLISS.

The Fe2OG dioxygenase domain occupies 205–306 (MTATMHLNWY…RISLGYFLGP (102 aa)). 3 residues coordinate Fe cation: histidine 229, aspartate 231, and histidine 287. Arginine 297 is a catalytic residue.

The protein belongs to the iron/ascorbate-dependent oxidoreductase family. GA3OX subfamily. L-ascorbate is required as a cofactor. The cofactor is Fe cation. Expressed in internodes, nodes and the ear of the elongating stem.

It catalyses the reaction gibberellin A20 + 2-oxoglutarate + O2 = gibberellin A1 + succinate + CO2. Converts the inactive gibberellin precursors GA9 and GA20 in the bioactives gibberellins GA4 and GA1. Also accepts GA15, GA44, the 2,3-unsaturated GA5 and 2,3-dihydroGA9 as substrate. No activity with GA12, GA53, GA24, GA19 and GA25. Also possesses 2-beta-hydroxylase, 2,3-desaturase, 2,3-epoxidase and 13-hydroxylase activities. The protein is Gibberellin 3-beta-dioxygenase 2-1 (GA3ox2-1) of Triticum aestivum (Wheat).